A 145-amino-acid chain; its full sequence is Putative pre-16S rRNA nuclease (145 aa).

It belongs to the YqgF nuclease family.

It localises to the cytoplasm. In terms of biological role, could be a nuclease involved in processing of the 5'-end of pre-16S rRNA. This Opitutus terrae (strain DSM 11246 / JCM 15787 / PB90-1) protein is Putative pre-16S rRNA nuclease.